Reading from the N-terminus, the 376-residue chain is Riboflavin biosynthesis protein RibD (376 aa).

The segment at 1–150 (MEDFSEQQLF…QPYLYQRTHN (150 aa)) is deaminase. In terms of domain architecture, CMP/dCMP-type deaminase spans 6–128 (EQQLFFMRRA…MLRQAGIQVY (123 aa)). A Zn(2+)-binding site is contributed by H55. The active-site Proton donor is the E57. Residues C80 and C89 each coordinate Zn(2+). Residues 151–376 (FPWTILKSAA…SPQVFEPIRN (226 aa)) are reductase. A159 contributes to the NADP(+) binding site. Residue S173 participates in substrate binding. W175 is a binding site for NADP(+). Substrate is bound at residue R189. Positions 201 and 205 each coordinate NADP(+). 2 residues coordinate substrate: L209 and R212. S230 serves as a coordination point for NADP(+). E300 provides a ligand contact to substrate. Residue 302–308 (GTTLHTS) coordinates NADP(+).

The protein in the N-terminal section; belongs to the cytidine and deoxycytidylate deaminase family. In the C-terminal section; belongs to the HTP reductase family. Zn(2+) serves as cofactor.

It carries out the reaction 2,5-diamino-6-hydroxy-4-(5-phosphoribosylamino)-pyrimidine + H2O + H(+) = 5-amino-6-(5-phospho-D-ribosylamino)uracil + NH4(+). It catalyses the reaction 5-amino-6-(5-phospho-D-ribitylamino)uracil + NADP(+) = 5-amino-6-(5-phospho-D-ribosylamino)uracil + NADPH + H(+). It participates in cofactor biosynthesis; riboflavin biosynthesis; 5-amino-6-(D-ribitylamino)uracil from GTP: step 2/4. The protein operates within cofactor biosynthesis; riboflavin biosynthesis; 5-amino-6-(D-ribitylamino)uracil from GTP: step 3/4. Its function is as follows. Converts 2,5-diamino-6-(ribosylamino)-4(3h)-pyrimidinone 5'-phosphate into 5-amino-6-(ribosylamino)-2,4(1h,3h)-pyrimidinedione 5'-phosphate. This chain is Riboflavin biosynthesis protein RibD (ribD), found in Chlamydia pneumoniae (Chlamydophila pneumoniae).